Here is a 149-residue protein sequence, read N- to C-terminus: Cyanate hydratase (149 aa).

Residues Arg90, Glu93, and Ser116 contribute to the active site.

It belongs to the cyanase family.

It carries out the reaction cyanate + hydrogencarbonate + 3 H(+) = NH4(+) + 2 CO2. Functionally, catalyzes the reaction of cyanate with bicarbonate to produce ammonia and carbon dioxide. In Aquifex aeolicus (strain VF5), this protein is Cyanate hydratase.